Reading from the N-terminus, the 626-residue chain is Putative Xaa-Pro dipeptidyl-peptidase (626 aa).

Catalysis depends on charge relay system residues S231, D348, and H379.

Belongs to the peptidase S15 family.

The enzyme catalyses Hydrolyzes Xaa-Pro-|- bonds to release unblocked, N-terminal dipeptides from substrates including Ala-Pro-|-p-nitroanilide and (sequentially) Tyr-Pro-|-Phe-Pro-|-Gly-Pro-|-Ile.. In Rhodopirellula baltica (strain DSM 10527 / NCIMB 13988 / SH1), this protein is Putative Xaa-Pro dipeptidyl-peptidase.